We begin with the raw amino-acid sequence, 263 residues long: Dihydromethanophenazine:CoB--CoM heterodisulfide reductase subunit E (263 aa).

5 helical membrane-spanning segments follow: residues 18–38 (TFVQIMIFSTIAIVIFLYGLI), 108–128 (VMHLFIFGGWMTLFALSGMMF), 150–170 (FLSIPNYIFGYILLIGVLVAL), 184–204 (IMYDWVLIGIVFLVTISGFIA), and 221–241 (VAPPAALFHSIFSLLFCIAFI).

This sequence belongs to the HdrE family. In terms of assembly, the dihydromethanophenazine:CoB--CoM heterodisulfide reductase is composed of two subunits; HdrD and HdrE. Heme b serves as cofactor.

It localises to the cell membrane. It carries out the reaction methanophenazine + coenzyme B + coenzyme M = dihydromethanophenazine + coenzyme M-coenzyme B heterodisulfide. It participates in cofactor metabolism; coenzyme M-coenzyme B heterodisulfide reduction; coenzyme B and coenzyme M from coenzyme M-coenzyme B heterodisulfide: step 1/1. Part of a complex that catalyzes the reversible reduction of CoM-S-S-CoB to the thiol-coenzymes H-S-CoM (coenzyme M) and H-S-CoB (coenzyme B). HdrE may be responsible for anchoring the complex to the membrane. This chain is Dihydromethanophenazine:CoB--CoM heterodisulfide reductase subunit E (hdrE), found in Methanosarcina barkeri (strain Fusaro / DSM 804).